The following is a 200-amino-acid chain: Probable nicotinate-nucleotide adenylyltransferase (200 aa).

It belongs to the NadD family.

It carries out the reaction nicotinate beta-D-ribonucleotide + ATP + H(+) = deamido-NAD(+) + diphosphate. It functions in the pathway cofactor biosynthesis; NAD(+) biosynthesis; deamido-NAD(+) from nicotinate D-ribonucleotide: step 1/1. In terms of biological role, catalyzes the reversible adenylation of nicotinate mononucleotide (NaMN) to nicotinic acid adenine dinucleotide (NaAD). The polypeptide is Probable nicotinate-nucleotide adenylyltransferase (Lachnoclostridium phytofermentans (strain ATCC 700394 / DSM 18823 / ISDg) (Clostridium phytofermentans)).